We begin with the raw amino-acid sequence, 175 residues long: Shikimate kinase (175 aa).

Residue 12–19 coordinates ATP; the sequence is GGRASGKS.

It belongs to the shikimate kinase family.

It is found in the cytoplasm. The catalysed reaction is shikimate + ATP = 3-phosphoshikimate + ADP + H(+). Its pathway is metabolic intermediate biosynthesis; chorismate biosynthesis; chorismate from D-erythrose 4-phosphate and phosphoenolpyruvate: step 5/7. This chain is Shikimate kinase, found in Nitratidesulfovibrio vulgaris (strain ATCC 29579 / DSM 644 / CCUG 34227 / NCIMB 8303 / VKM B-1760 / Hildenborough) (Desulfovibrio vulgaris).